Here is a 427-residue protein sequence, read N- to C-terminus: Adenylosuccinate synthetase (427 aa).

GTP contacts are provided by residues 12–18 and 40–42; these read GDEGKGK and GHT. Residue Asp13 is the Proton acceptor of the active site. Mg(2+) is bound by residues Asp13 and Gly40. IMP-binding positions include 13-16, 38-41, Thr131, Arg145, Gln226, Thr241, and Arg305; these read DEGK and NAGH. The active-site Proton donor is His41. 301-307 is a binding site for substrate; it reads ATTGRKR. GTP contacts are provided by residues Arg307, 333-335, and 415-417; these read KLD and SVG.

This sequence belongs to the adenylosuccinate synthetase family. As to quaternary structure, homodimer. Mg(2+) serves as cofactor.

It localises to the cytoplasm. The catalysed reaction is IMP + L-aspartate + GTP = N(6)-(1,2-dicarboxyethyl)-AMP + GDP + phosphate + 2 H(+). The protein operates within purine metabolism; AMP biosynthesis via de novo pathway; AMP from IMP: step 1/2. Functionally, plays an important role in the de novo pathway of purine nucleotide biosynthesis. Catalyzes the first committed step in the biosynthesis of AMP from IMP. This Oleidesulfovibrio alaskensis (strain ATCC BAA-1058 / DSM 17464 / G20) (Desulfovibrio alaskensis) protein is Adenylosuccinate synthetase.